Consider the following 141-residue polypeptide: Acetyltransferase YE1169 (141 aa).

Residues 1-141 (MEIRVFQQSD…GKRLIVDQEY (141 aa)) enclose the N-acetyltransferase domain.

It belongs to the acetyltransferase family. YpeA subfamily.

The polypeptide is Acetyltransferase YE1169 (Yersinia enterocolitica serotype O:8 / biotype 1B (strain NCTC 13174 / 8081)).